Reading from the N-terminus, the 152-residue chain is UPF0178 protein Plav_1521 (152 aa).

A disordered region spans residues 114–152; sequence LRETGQSKGGGPAFSKEDRSRFLRSLEDTVQAIRRRPPP. Residues 128–140 are compositionally biased toward basic and acidic residues; sequence SKEDRSRFLRSLE.

Belongs to the UPF0178 family.

The sequence is that of UPF0178 protein Plav_1521 from Parvibaculum lavamentivorans (strain DS-1 / DSM 13023 / NCIMB 13966).